The following is a 53-amino-acid chain: Large ribosomal subunit protein bL32c (53 aa).

This sequence belongs to the bacterial ribosomal protein bL32 family.

The protein localises to the plastid. The protein resides in the chloroplast. The sequence is that of Large ribosomal subunit protein bL32c from Phaseolus vulgaris (Kidney bean).